We begin with the raw amino-acid sequence, 501 residues long: Actin nucleation-promoting factor WASL (501 aa).

Position 2 is an N-acetylserine (Ser2). Residues 31 to 138 (LGKKCVTMSS…KAVTDLLGRR (108 aa)) form the WH1 domain. Disordered stretches follow at residues 135 to 158 (LGRR…PMAT) and 180 to 202 (SHTK…DIGT). Residues 183-195 (KEKKKGKAKKKRL) show a composition bias toward basic residues. The CRIB domain maps to 200–213 (IGTPSNFQHIGHVG). Ser239 carries the post-translational modification Phosphoserine; by TNK2. Tyr253 carries the post-translational modification Phosphotyrosine; by FAK1 and TNK2. 2 disordered regions span residues 263–405 (EAVK…KAAL) and 442–501 (QLKS…EWED). 2 stretches are compositionally biased toward pro residues: residues 273–361 (APPP…PPPL) and 368–387 (APPP…PPGL). Position 304 is an omega-N-methylarginine (Arg304). 2 consecutive WH2 domains span residues 401–418 (NKAA…LKKV) and 429–446 (GRDA…LKSV). A compositionally biased stretch (polar residues) spans 442-453 (QLKSVSDGQEST). A phosphoserine mark is found at Ser480 and Ser481. The span at 482 to 501 (DEDEDDDDEEDFQDDDEWED) shows a compositional bias: acidic residues.

As to quaternary structure, binds actin and the Arp2/3 complex. Interacts with CDC42. Interacts with FCHSD1. Interacts with FCHSD2. Binds to SH3 domains of GRB2. Interacts with the C-terminal SH3 domain of DNMBP. Interacts with SNX9. Interacts with the WW domains of PRPF40A/FBP11. Interacts with PTK2/FAK1. Interacts with PACSIN1, PACSIN2 and PACSIN3. Interacts with NOSTRIN. Binds to TNK2. Interacts with SNX33. Interacts with NONO (via second RRM domain); the interaction is direct. Component of a multiprotein complex with NONO and SFPQ; associates with the complex via direct interaction with NONO. In terms of processing, phosphorylation at Ser-239, Tyr-253, Ser-480 and Ser-481 enhances actin polymerization activity.

The protein localises to the cytoplasm. Its subcellular location is the cytoskeleton. It is found in the nucleus. Regulates actin polymerization by stimulating the actin-nucleating activity of the Arp2/3 complex. Involved in various processes, such as mitosis and cytokinesis, via its role in the regulation of actin polymerization. Together with CDC42, involved in the extension and maintenance of the formation of thin, actin-rich surface projections called filopodia. In addition to its role in the cytoplasm, also plays a role in the nucleus by regulating gene transcription, probably by promoting nuclear actin polymerization. Binds to HSF1/HSTF1 and forms a complex on heat shock promoter elements (HSE) that negatively regulates HSP90 expression. Plays a role in dendrite spine morphogenesis. This chain is Actin nucleation-promoting factor WASL (Wasl), found in Rattus norvegicus (Rat).